We begin with the raw amino-acid sequence, 62 residues long: Large ribosomal subunit protein bL32m (62 aa).

It belongs to the bacterial ribosomal protein bL32 family.

The protein localises to the mitochondrion. This is Large ribosomal subunit protein bL32m (RPL32) from Reclinomonas americana.